We begin with the raw amino-acid sequence, 310 residues long: ADP-L-glycero-D-manno-heptose-6-epimerase (310 aa).

Residues 10 to 11 (FI), 31 to 32 (DN), Lys38, Lys53, 75 to 79 (EGACS), and Asn92 each bind NADP(+). The active-site Proton acceptor is Tyr140. Lys144 serves as a coordination point for NADP(+). Asn169 contacts substrate. NADP(+) is bound by residues Val170 and Lys178. Catalysis depends on Lys178, which acts as the Proton acceptor. Residues Ser180, His187, 201–204 (FEGS), Arg209, and Tyr272 each bind substrate.

The protein belongs to the NAD(P)-dependent epimerase/dehydratase family. HldD subfamily. Homopentamer. Requires NADP(+) as cofactor.

It carries out the reaction ADP-D-glycero-beta-D-manno-heptose = ADP-L-glycero-beta-D-manno-heptose. It functions in the pathway nucleotide-sugar biosynthesis; ADP-L-glycero-beta-D-manno-heptose biosynthesis; ADP-L-glycero-beta-D-manno-heptose from D-glycero-beta-D-manno-heptose 7-phosphate: step 4/4. Functionally, catalyzes the interconversion between ADP-D-glycero-beta-D-manno-heptose and ADP-L-glycero-beta-D-manno-heptose via an epimerization at carbon 6 of the heptose. This is ADP-L-glycero-D-manno-heptose-6-epimerase from Klebsiella pneumoniae (strain 342).